We begin with the raw amino-acid sequence, 154 residues long: Superoxide dismutase [Cu-Zn] (154 aa).

Cu cation contacts are provided by His47, His49, and His64. Cys58 and Cys147 are joined by a disulfide. Zn(2+) is bound by residues His64, His72, His81, and Asp84. His121 is a binding site for Cu cation. Arg144 serves as a coordination point for substrate.

This sequence belongs to the Cu-Zn superoxide dismutase family. Homodimer. The cofactor is Cu cation. Zn(2+) serves as cofactor.

It is found in the cytoplasm. It catalyses the reaction 2 superoxide + 2 H(+) = H2O2 + O2. Destroys radicals which are normally produced within the cells and which are toxic to biological systems. This is Superoxide dismutase [Cu-Zn] (sod1) from Schizosaccharomyces pombe (strain 972 / ATCC 24843) (Fission yeast).